The primary structure comprises 621 residues: 1,4-alpha-glucan branching enzyme GlgB (621 aa).

Aspartate 302 functions as the Nucleophile in the catalytic mechanism. Glutamate 355 acts as the Proton donor in catalysis.

Belongs to the glycosyl hydrolase 13 family. GlgB subfamily. Monomer.

It carries out the reaction Transfers a segment of a (1-&gt;4)-alpha-D-glucan chain to a primary hydroxy group in a similar glucan chain.. It participates in glycan biosynthesis; glycogen biosynthesis. In terms of biological role, catalyzes the formation of the alpha-1,6-glucosidic linkages in glycogen by scission of a 1,4-alpha-linked oligosaccharide from growing alpha-1,4-glucan chains and the subsequent attachment of the oligosaccharide to the alpha-1,6 position. The chain is 1,4-alpha-glucan branching enzyme GlgB from Dechloromonas aromatica (strain RCB).